Consider the following 310-residue polypeptide: MSKLDESEIIKIFQRKLGNKNSEDVEIFKLKQNIIAKTDTLVQSTDIPPKMKLGEAARKSVVACVSDFAAKGVKPQYGIISINFPSNISRSKVEEAATGFRKACSEFGISILGGDTNAGKEIVFNVCLFGSAEKIVPRNGSESKDLIFATGPFGYTGAGLSILLYKKKGKREFVAKAIKAVTHPKPRVDFGVKNKRYFTSSMDSSDGLSTTLNEMAKQSKKKFVINNSPHKKDLGEFAKSNQDNLVFHGGEEYEFVFTINPKHKKTILKNAKSLRTPIIEIGYVTTGKGVILQRDNKDIPLKDKGWKHFR.

3 residues coordinate Mg(2+): D24, T38, and D39. D46 contacts substrate. Mg(2+) is bound by residues D67 and D115. ATP contacts are provided by residues 114–115 and R138; that span reads GD. Mg(2+) is bound at residue D203. S205 lines the ATP pocket. D206 provides a ligand contact to Mg(2+). Residues E251 and W306 each coordinate substrate.

Belongs to the thiamine-monophosphate kinase family.

The enzyme catalyses thiamine phosphate + ATP = thiamine diphosphate + ADP. It participates in cofactor biosynthesis; thiamine diphosphate biosynthesis; thiamine diphosphate from thiamine phosphate: step 1/1. In terms of biological role, catalyzes the ATP-dependent phosphorylation of thiamine-monophosphate (TMP) to form thiamine-pyrophosphate (TPP), the active form of vitamin B1. This is Thiamine-monophosphate kinase from Nitrosopumilus maritimus (strain SCM1).